The sequence spans 119 residues: Large ribosomal subunit protein uL18 (119 aa).

Positions 1-20 (MISKPDKNKTRQKRHTRVRG) are disordered. Residues 10–20 (TRQKRHTRVRG) are compositionally biased toward basic residues.

The protein belongs to the universal ribosomal protein uL18 family. Part of the 50S ribosomal subunit; part of the 5S rRNA/L5/L18/L25 subcomplex. Contacts the 5S and 23S rRNAs.

In terms of biological role, this is one of the proteins that bind and probably mediate the attachment of the 5S RNA into the large ribosomal subunit, where it forms part of the central protuberance. The sequence is that of Large ribosomal subunit protein uL18 from Latilactobacillus sakei subsp. sakei (strain 23K) (Lactobacillus sakei subsp. sakei).